Consider the following 256-residue polypeptide: Probable hydroxyacylglutathione hydrolase glo2 (256 aa).

Zn(2+)-binding residues include His-63, His-65, Asp-67, His-68, His-118, and Asp-139. Substrate contacts are provided by residues Arg-148, 178–180, and 250–253; these read HEY and RDMK. Residue His-178 participates in Zn(2+) binding.

The protein belongs to the metallo-beta-lactamase superfamily. Glyoxalase II family. Zn(2+) serves as cofactor.

It is found in the cytoplasm. The protein localises to the nucleus. The catalysed reaction is an S-(2-hydroxyacyl)glutathione + H2O = a 2-hydroxy carboxylate + glutathione + H(+). It catalyses the reaction (R)-S-lactoylglutathione + H2O = (R)-lactate + glutathione + H(+). The protein operates within secondary metabolite metabolism; methylglyoxal degradation; (R)-lactate from methylglyoxal: step 2/2. Its function is as follows. Thiolesterase that catalyzes the hydrolysis of S-D-lactoylglutathione to form glutathione and D-lactic acid. Involved in the metabolism of methylglyoxal, a toxic compound for yeast proliferation, by converting methylglyoxal to lactate via S-D-lactoylglutathione by sequential enzyme reactions catalyzed by glyoxalase I and glyoxalase II. The chain is Probable hydroxyacylglutathione hydrolase glo2 (glo2) from Schizosaccharomyces pombe (strain 972 / ATCC 24843) (Fission yeast).